A 327-amino-acid chain; its full sequence is Aldo-keto reductase family 7 member A3 (327 aa).

Serine 2 carries the post-translational modification Phosphoserine. Residues methionine 13, arginine 18, and aspartate 40 each coordinate NADP(+). Tyrosine 45 serves as the catalytic Proton donor. Histidine 109 serves as a coordination point for citrate. NADP(+) contacts are provided by asparagine 140, asparagine 194, leucine 196, glycine 198, arginine 204, and arginine 218. Citrate contacts are provided by tyrosine 228 and arginine 231. Residues serine 286, glutamine 290, glutamine 293, asparagine 294, and arginine 327 each coordinate NADP(+).

It belongs to the aldo/keto reductase family. Aldo/keto reductase 2 subfamily. In terms of assembly, homodimer. Heterodimer with AKR7A2.

The protein resides in the cytoplasm. It carries out the reaction a primary alcohol + NADP(+) = an aldehyde + NADPH + H(+). The catalysed reaction is aflatoxin B1 dialdehyde + NADPH + H(+) = aflatoxin B1 C(6a)-monoaldehyde + NADP(+). The enzyme catalyses aflatoxin B1 dialdehyde + NADPH + H(+) = aflatoxin B1 C(8)-monoaldehyde + NADP(+). It catalyses the reaction aflatoxin B1 C(6a)-monoaldehyde + NADPH + 2 H(+) = aflatoxin B1 triol + NADP(+). Its activity is regulated as follows. Inhibited by citrate. Its function is as follows. Catalyzes the NADPH-dependent reduction of various carbonyl-containing compounds, including aldehydes, ketones, and toxic products from cellular metabolism or environmental exposure. Can reduce the dialdehyde form of aflatoxin B1 (AFB1) into alcohol derivatives, via monoaldehydes intermediates, thus preventing the formation of protein adducts that contribute to AFB1-induced toxicity. The sequence is that of Aldo-keto reductase family 7 member A3 from Rattus norvegicus (Rat).